We begin with the raw amino-acid sequence, 123 residues long: Small ribosomal subunit protein uS12 (123 aa).

Positions Met1–Thr21 are disordered. Residues Arg9–Lys20 show a composition bias toward basic residues.

Belongs to the universal ribosomal protein uS12 family. Part of the 30S ribosomal subunit. Contacts proteins S8 and S17. May interact with IF1 in the 30S initiation complex.

Its function is as follows. With S4 and S5 plays an important role in translational accuracy. In terms of biological role, interacts with and stabilizes bases of the 16S rRNA that are involved in tRNA selection in the A site and with the mRNA backbone. Located at the interface of the 30S and 50S subunits, it traverses the body of the 30S subunit contacting proteins on the other side and probably holding the rRNA structure together. The combined cluster of proteins S8, S12 and S17 appears to hold together the shoulder and platform of the 30S subunit. The chain is Small ribosomal subunit protein uS12 from Bifidobacterium longum (strain NCC 2705).